Reading from the N-terminus, the 59-residue chain is Cortexin domain-containing 1 protein (59 aa).

The helical transmembrane segment at 17 to 37 (LTLACFVFLCLFLVVMIIRCA) threads the bilayer.

Its subcellular location is the membrane. In Homo sapiens (Human), this protein is Cortexin domain-containing 1 protein.